The chain runs to 298 residues: N-acetylmuramic acid 6-phosphate etherase (298 aa).

In terms of domain architecture, SIS spans 55 to 218 (IHAQVSGGGR…STGLMIKSGK (164 aa)). E83 acts as the Proton donor in catalysis. The active site involves E114.

Belongs to the GCKR-like family. MurNAc-6-P etherase subfamily. Homodimer.

The catalysed reaction is N-acetyl-D-muramate 6-phosphate + H2O = N-acetyl-D-glucosamine 6-phosphate + (R)-lactate. It functions in the pathway amino-sugar metabolism; 1,6-anhydro-N-acetylmuramate degradation. The protein operates within amino-sugar metabolism; N-acetylmuramate degradation. Its pathway is cell wall biogenesis; peptidoglycan recycling. Specifically catalyzes the cleavage of the D-lactyl ether substituent of MurNAc 6-phosphate, producing GlcNAc 6-phosphate and D-lactate. Together with AnmK, is also required for the utilization of anhydro-N-acetylmuramic acid (anhMurNAc) either imported from the medium or derived from its own cell wall murein, and thus plays a role in cell wall recycling. The sequence is that of N-acetylmuramic acid 6-phosphate etherase from Shigella flexneri serotype 5b (strain 8401).